We begin with the raw amino-acid sequence, 438 residues long: Rhomboid-related protein 1 (438 aa).

A disordered region spans residues 1–62; sequence MGRVEDGGTT…PSQPGPALWS (62 aa). Positions 8-17 are enriched in acidic residues; sequence GTTEELEDWD. 7 helical membrane passes run 196–216, 262–282, 284–304, 308–328, 340–359, 372–392, and 405–425; these read PPVFMASVTLAQIIVFLCYGA, GFNALLQLMIGVPLEMVHGLL, ISLLYLAGVLAGSLTVSITDM, VVGGSGGVYALCSAHLANVVM, LRMVLALVCMSSEVGRAVWL, PSFMAHLAGAVVGVSMGLTIL, and WWVVLLAYGTFLLFAVFWNVF. The active-site Nucleophile is the S312. The active site involves H377.

The protein belongs to the peptidase S54 family. In terms of tissue distribution, detected in heart, brain, skeletal muscle and kidney.

It localises to the membrane. It catalyses the reaction Cleaves type-1 transmembrane domains using a catalytic dyad composed of serine and histidine that are contributed by different transmembrane domains.. Functionally, may be involved in regulated intramembrane proteolysis and the subsequent release of functional polypeptides from their membrane anchors. This is Rhomboid-related protein 1 (RHBDL1) from Homo sapiens (Human).